Consider the following 346-residue polypeptide: Peripherin-2 (346 aa).

Residues 1 to 18 (MALLKVKFDQKKRVKLAQ) lie on the Cytoplasmic side of the membrane. Residues 19 to 41 (GLWLMNWFSVLAGIIIFGLGLFL) traverse the membrane as a helical segment. The Lumenal segment spans residues 42–62 (KIELRKRSDVMNNSESHFVPN). Asparagine 53 carries N-linked (GlcNAc...) asparagine glycosylation. A helical membrane pass occupies residues 63 to 79 (SLIGVGVLSCVFNSLAG). The Cytoplasmic portion of the chain corresponds to 80–101 (KICYDALDPAKYAKWKPWLKPY). Residues 102–122 (LAVCVLFNVVLFLVALCCFLL) form a helical membrane-spanning segment. Over 123 to 264 (RGSLESTLAH…LSYYSNLMNT (142 aa)) the chain is Lumenal. N-linked (GlcNAc...) asparagine glycans are attached at residues asparagine 229 and asparagine 263. Residues 265-283 (TGAVTLLVWLFEVTITVGL) traverse the membrane as a helical segment. Topologically, residues 284 to 346 (RYLHTALEGM…EDAGQAPAAG (63 aa)) are cytoplasmic. Positions 341 to 346 (QAPAAG) are interaction with MREG.

This sequence belongs to the PRPH2/ROM1 family. As to quaternary structure, homodimer; disulfide-linked. Forms a homotetramer. Forms a heterotetramer with ROM1. Homotetramer and heterotetramer core complexes go on to form higher order complexes by formation of intermolecular disulfide bonds. Interacts with MREG. Interacts with STX3. Interacts with SNAP25. As to expression, retina (photoreceptor). In rim region of ROS (rod outer segment) disks.

Its subcellular location is the membrane. The protein localises to the cell projection. The protein resides in the cilium. It localises to the photoreceptor outer segment. It is found in the photoreceptor inner segment. Its function is as follows. Essential for retina photoreceptor outer segment disk morphogenesis, may also play a role with ROM1 in the maintenance of outer segment disk structure. Required for the maintenance of retinal outer nuclear layer thickness. Required for the correct development and organization of the photoreceptor inner segment. In Bos taurus (Bovine), this protein is Peripherin-2 (PRPH2).